A 793-amino-acid polypeptide reads, in one-letter code: Ribosome biogenesis protein BOP1 homolog (793 aa).

Residues Met1–Gly11 are compositionally biased toward basic residues. The segment at Met1 to Ile168 is disordered. 3 stretches are compositionally biased toward acidic residues: residues Glu44–Asp53, Ser60–Gly72, and Ser83–Glu116. The span at Glu117 to Asp129 shows a compositional bias: basic and acidic residues. Residues Ser133 to Pro143 show a composition bias toward polar residues. Residues Asp146–Asp161 show a composition bias toward basic and acidic residues. WD repeat units lie at residues Gly454–Glu495, Glu497–Val535, Asn579–Pro621, Lys624–Lys662, Thr665–Gln704, Leu708–Gln747, and Arg763–Thr793.

It belongs to the WD repeat BOP1/ERB1 family.

Its subcellular location is the nucleus. It is found in the nucleolus. The protein localises to the nucleoplasm. Its function is as follows. Required for maturation of ribosomal RNAs and formation of the large ribosomal subunit. This Drosophila ananassae (Fruit fly) protein is Ribosome biogenesis protein BOP1 homolog.